Consider the following 704-residue polypeptide: MLKDLNKVRNIGIMAHIDAGKTTTTERILFYTGINRKVGETHDGASTTDWMEQEKERGITITSAAVTCFWNGNQVNIIDTPGHVDFTVEVERSLRVLDGAVAVFDGKEGVEPQSEQVWRQAAKYDVPRICFVNKMDKLGADFYFTVQTIIDRLGAKPLVMQLPIGAEDDFDGVVDLLEMKAITWRGKVETGAEPVIEEIPADLADKAAEYREKLVETVAESDEALMEKYFGGEELTIEELKAGIRKLTVNSEVYPVLCGTAYRNKGVQPLLDAVIDYLPTPLDIGEVHGHKVGDETVDLVRKPSVDEPFSALAFKIAAHPFFGKLTFVRVYSGIVEPGAQVANSTKGKNERIGKLFQMHANKENPVDEARAGNIYAFIGLKDTTTGDTLCDKNDQIILESMDFPDPVIKVSIEPKTKSDQEKLGTAIQKLSEEDPTFTVELDEESGQTVIGGMGELHLDVLVDRMKREFKVEANVGNPQVAYRETIRKPVEKLEYTHKKQTGGSGQFAKVIIGIEPYAPEAETLEEGESATYKFENAVTGGRVPKEYIPSVDAGIQDAMQYGYLAGFPLVNIKATLIDGAYHEVDSSEMAFKLAGSQALKEAVAKAKPVLLEPLMAVEVITPEEYMGDVIGDINSRRGQVSAMDDRAGAKVVKAKVPLSEMFGYVGDLRSRTQGRANYTMIFDSYAEVPTNVAAEIVAERNGTA.

The 277-residue stretch at 6–282 folds into the tr-type G domain; sequence NKVRNIGIMA…AVIDYLPTPL (277 aa). Residues 15-22, 79-83, and 133-136 contribute to the GTP site; these read AHIDAGKT, DTPGH, and NKMD.

Belongs to the TRAFAC class translation factor GTPase superfamily. Classic translation factor GTPase family. EF-G/EF-2 subfamily.

It localises to the cytoplasm. In terms of biological role, catalyzes the GTP-dependent ribosomal translocation step during translation elongation. During this step, the ribosome changes from the pre-translocational (PRE) to the post-translocational (POST) state as the newly formed A-site-bound peptidyl-tRNA and P-site-bound deacylated tRNA move to the P and E sites, respectively. Catalyzes the coordinated movement of the two tRNA molecules, the mRNA and conformational changes in the ribosome. In Corynebacterium diphtheriae (strain ATCC 700971 / NCTC 13129 / Biotype gravis), this protein is Elongation factor G.